Reading from the N-terminus, the 223-residue chain is MMNIIKIDNTQSGIFLERINKYLAKIYLNENVVDVHVHDPGRLKELLFKNNKVLVKKVNSTNRKTKYDLIAAKKEKEYVLVHSMYHRYIAEKILRKKYTHLKAEVKYKNSRIDFLAEDKFWIEIKGCTLSDGNMARFPDAPTKRGTKHLEDLMELKKQGFDTFIYFLIFANANYFSPNYETDLSFSKKLEEAYSLGVKIVPLLFSLENNWIVFKREIQLIFDG.

Belongs to the SfsA family.

The polypeptide is Sugar fermentation stimulation protein homolog (Thermosipho melanesiensis (strain DSM 12029 / CIP 104789 / BI429)).